The primary structure comprises 290 residues: 4-hydroxybenzoate octaprenyltransferase (290 aa).

The next 9 helical transmembrane spans lie at 20–40 (IGIL…AEGV), 43–63 (LDIL…GCVV), 92–112 (EALL…QPLN), 114–131 (LTIE…SYPF), 135–155 (FFAM…PMAF), 160–180 (GEVP…VIAY), 209–229 (VVGV…IGLL), 231–251 (NLGV…LYQY), and 266–286 (FLHN…DYLV).

It belongs to the UbiA prenyltransferase family. Mg(2+) serves as cofactor.

The protein resides in the cell inner membrane. It carries out the reaction all-trans-octaprenyl diphosphate + 4-hydroxybenzoate = 4-hydroxy-3-(all-trans-octaprenyl)benzoate + diphosphate. Its pathway is cofactor biosynthesis; ubiquinone biosynthesis. Its function is as follows. Catalyzes the prenylation of para-hydroxybenzoate (PHB) with an all-trans polyprenyl group. Mediates the second step in the final reaction sequence of ubiquinone-8 (UQ-8) biosynthesis, which is the condensation of the polyisoprenoid side chain with PHB, generating the first membrane-bound Q intermediate 3-octaprenyl-4-hydroxybenzoate. This Nitrosospira multiformis (strain ATCC 25196 / NCIMB 11849 / C 71) protein is 4-hydroxybenzoate octaprenyltransferase.